The chain runs to 503 residues: tRNA-guanine(15) transglycosylase (503 aa).

The Nucleophile role is filled by Asp86. Position 121 (Asp121) interacts with substrate. Cys278, Cys280, and Cys283 together coordinate Zn(2+).

The protein belongs to the archaeosine tRNA-ribosyltransferase family. Zn(2+) serves as cofactor.

It catalyses the reaction guanosine(15) in tRNA + 7-cyano-7-deazaguanine = 7-cyano-7-carbaguanosine(15) in tRNA + guanine. It participates in tRNA modification; archaeosine-tRNA biosynthesis. In terms of biological role, exchanges the guanine residue with 7-cyano-7-deazaguanine (preQ0) at position 15 in the dihydrouridine loop (D-loop) of archaeal tRNAs. This is tRNA-guanine(15) transglycosylase from Saccharolobus solfataricus (strain ATCC 35092 / DSM 1617 / JCM 11322 / P2) (Sulfolobus solfataricus).